A 70-amino-acid chain; its full sequence is U2-agatoxin-Ao1m (70 aa).

Residues 1 to 20 (MRAIISLFLISAMVFSMIQA) form the signal peptide. Positions 21 to 34 (VPEEXGLQLSEDER) are excised as a propeptide. Cystine bridges form between Cys37–Cys53, Cys44–Cys58, and Cys52–Cys68. Leu69 is modified (leucine amide).

The protein belongs to the neurotoxin 01 (U2-agtx) family. In terms of tissue distribution, expressed by the venom gland.

Its subcellular location is the secreted. In terms of biological role, insect active toxin causing rapid but reversible paralysis in crickets. No activity shown in mammals. Does not show effect on mammalian voltage-gated calcium channels. This chain is U2-agatoxin-Ao1m, found in Agelena orientalis (Funnel-web spider).